The primary structure comprises 1755 residues: Transposon Ty1-DR5 Gag-Pol polyprotein (1755 aa).

Polar residues-rich tracts occupy residues 1–10, 48–60, and 127–152; these read MESQQLSNYP, TKAN…TPAS, and QSQF…GNTF. Disordered regions lie at residues 1–93, 126–173, and 352–421; these read MESQ…MMTQ, PQSQ…RPPP, and GSRN…SKST. Residues 153 to 165 are compositionally biased toward low complexity; that stretch reads TDSSSADSDMTST. Positions 299–401 are RNA-binding; sequence NNGIHINNKV…NSKSKTARAH (103 aa). Low complexity predominate over residues 402 to 418; sequence NVSTSNNSPSTDNDSIS. Catalysis depends on aspartate 461, which acts as the For protease activity; shared with dimeric partner. Positions 583 to 640 are integrase-type zinc finger-like; the sequence is NVHTSESTRKYPYPFIHRMLAHANAQTIRYSLKNNTITYFNESDVDWSSAIDYQCPDC. One can recognise an Integrase catalytic domain in the interval 660–835; it reads NSYEPFQYLH…AGLDISTLLP (176 aa). Residues aspartate 671 and aspartate 736 each coordinate Mg(2+). Disordered stretches follow at residues 956–1087, 1092–1111, and 1130–1187; these read SKAV…ETEK, RSPS…NIVP, and DLPL…DNET. Positions 960–969 are enriched in low complexity; that stretch reads SPTDSTPPST. Polar residues predominate over residues 1005 to 1015; the sequence is STPQISNIEST. Positions 1038–1053 are enriched in basic and acidic residues; sequence ESSHASKSKDFRHSDS. Composition is skewed to polar residues over residues 1054 to 1082 and 1101 to 1111; these read YSEN…QISD and PENNSSHNIVP. The short motif at 1178-1212 is the Bipartite nuclear localization signal element; the sequence is KKRSLEDNETEIKVSRDTWNTKNMRSLEPPRSKKR. The 139-residue stretch at 1338–1476 folds into the Reverse transcriptase Ty1/copia-type domain; it reads NNYYITQLDI…DILGLEIKYQ (139 aa). Aspartate 1346, aspartate 1427, aspartate 1428, aspartate 1610, glutamate 1652, and aspartate 1685 together coordinate Mg(2+). The 143-residue stretch at 1610–1752 folds into the RNase H Ty1/copia-type domain; the sequence is DASYGNQPYY…IKTFKLLTNK (143 aa).

The capsid protein forms a homotrimer, from which the VLPs are assembled. The protease is a homodimer, whose active site consists of two apposed aspartic acid residues. Initially, virus-like particles (VLPs) are composed of the structural unprocessed proteins Gag and Gag-Pol, and also contain the host initiator methionine tRNA (tRNA(i)-Met) which serves as a primer for minus-strand DNA synthesis, and a dimer of genomic Ty RNA. Processing of the polyproteins occurs within the particle and proceeds by an ordered pathway, called maturation. First, the protease (PR) is released by autocatalytic cleavage of the Gag-Pol polyprotein yielding capsid protein p45 and a Pol-p154 precursor protein. This cleavage is a prerequisite for subsequent processing of Pol-p154 at the remaining sites to release the mature structural and catalytic proteins. Maturation takes place prior to the RT reaction and is required to produce transposition-competent VLPs.

It localises to the cytoplasm. The protein localises to the nucleus. It carries out the reaction DNA(n) + a 2'-deoxyribonucleoside 5'-triphosphate = DNA(n+1) + diphosphate. The enzyme catalyses Endonucleolytic cleavage to 5'-phosphomonoester.. Its function is as follows. Capsid protein (CA) is the structural component of the virus-like particle (VLP), forming the shell that encapsulates the retrotransposons dimeric RNA genome. The particles are assembled from trimer-clustered units and there are holes in the capsid shells that allow for the diffusion of macromolecules. CA also has nucleocapsid-like chaperone activity, promoting primer tRNA(i)-Met annealing to the multipartite primer-binding site (PBS), dimerization of Ty1 RNA and initiation of reverse transcription. In terms of biological role, the aspartyl protease (PR) mediates the proteolytic cleavages of the Gag and Gag-Pol polyproteins after assembly of the VLP. Reverse transcriptase/ribonuclease H (RT) is a multifunctional enzyme that catalyzes the conversion of the retro-elements RNA genome into dsDNA within the VLP. The enzyme displays a DNA polymerase activity that can copy either DNA or RNA templates, and a ribonuclease H (RNase H) activity that cleaves the RNA strand of RNA-DNA heteroduplexes during plus-strand synthesis and hydrolyzes RNA primers. The conversion leads to a linear dsDNA copy of the retrotransposon that includes long terminal repeats (LTRs) at both ends. Functionally, integrase (IN) targets the VLP to the nucleus, where a subparticle preintegration complex (PIC) containing at least integrase and the newly synthesized dsDNA copy of the retrotransposon must transit the nuclear membrane. Once in the nucleus, integrase performs the integration of the dsDNA into the host genome. The sequence is that of Transposon Ty1-DR5 Gag-Pol polyprotein (TY1B-DR5) from Saccharomyces cerevisiae (strain ATCC 204508 / S288c) (Baker's yeast).